The sequence spans 499 residues: Patatin-like protein 6 (499 aa).

Residues 111–314 enclose the PNPLA domain; sequence LSIDSGGMRG…AMSNPTAAAI (204 aa). Residues 116–119 carry the GGXR motif; it reads GGMR. The Nucleophile role is filled by serine 155. Aspartate 301 acts as the Proton acceptor in catalysis. Positions 301-303 match the DGA/G motif; the sequence is DGG.

It belongs to the patatin family. As to expression, highly expressed in siliques and at lower levels in roots and flowers.

Its function is as follows. Possesses non-specific lipolytic acyl hydrolase (LAH) activity. Hydrolyzes phospholipids as well as galactolipids. May play a role in disease resistance. This Arabidopsis thaliana (Mouse-ear cress) protein is Patatin-like protein 6 (PLP6).